The following is a 69-amino-acid chain: MKNVVIFLIKLYQRYISPMKPRSCRFYPTCSQYSIEAISKYGLLKGGIMSIWRILRCNPFNPGGYDPVK.

Belongs to the UPF0161 family.

It localises to the cell membrane. Could be involved in insertion of integral membrane proteins into the membrane. The protein is Putative membrane protein insertion efficiency factor of Thermoanaerobacter pseudethanolicus (strain ATCC 33223 / 39E) (Clostridium thermohydrosulfuricum).